The primary structure comprises 416 residues: Adenylosuccinate synthetase (416 aa).

GTP is bound by residues 13–19 (GDEGKGK) and 41–43 (GHT). Residue Asp-14 is the Proton acceptor of the active site. Residues Asp-14 and Gly-41 each contribute to the Mg(2+) site. Residues 14–17 (DEGK), 39–42 (NAGH), Thr-126, Arg-140, Gln-220, Thr-235, and Arg-299 contribute to the IMP site. The active-site Proton donor is the His-42. Residue 295-301 (TTTGRKR) coordinates substrate. Residues Arg-301, 327 to 329 (KLD), and 405 to 407 (STS) contribute to the GTP site.

The protein belongs to the adenylosuccinate synthetase family. Homodimer. Mg(2+) is required as a cofactor.

The protein localises to the cytoplasm. The catalysed reaction is IMP + L-aspartate + GTP = N(6)-(1,2-dicarboxyethyl)-AMP + GDP + phosphate + 2 H(+). It functions in the pathway purine metabolism; AMP biosynthesis via de novo pathway; AMP from IMP: step 1/2. Functionally, plays an important role in the de novo pathway of purine nucleotide biosynthesis. Catalyzes the first committed step in the biosynthesis of AMP from IMP. The chain is Adenylosuccinate synthetase from Campylobacter hominis (strain ATCC BAA-381 / DSM 21671 / CCUG 45161 / LMG 19568 / NCTC 13146 / CH001A).